Consider the following 315-residue polypeptide: Homoserine kinase (315 aa).

97–107 provides a ligand contact to ATP; that stretch reads PPARGLGSSAT.

Belongs to the GHMP kinase family. Homoserine kinase subfamily.

The protein localises to the cytoplasm. The catalysed reaction is L-homoserine + ATP = O-phospho-L-homoserine + ADP + H(+). It functions in the pathway amino-acid biosynthesis; L-threonine biosynthesis; L-threonine from L-aspartate: step 4/5. In terms of biological role, catalyzes the ATP-dependent phosphorylation of L-homoserine to L-homoserine phosphate. This is Homoserine kinase from Prochlorococcus marinus (strain NATL1A).